The following is a 467-amino-acid chain: Chromosomal replication initiator protein DnaA (467 aa).

Residues 1–90 (MSLSLWQQCL…KSVTQTPQAA (90 aa)) are domain I, interacts with DnaA modulators. The interval 91–130 (VTSNVAAPAQVAQTQPQRAAPSTRSGWDNVPAPAEPTYRS) is domain II. Residues 97–111 (APAQVAQTQPQRAAP) show a composition bias toward low complexity. The disordered stretch occupies residues 97-119 (APAQVAQTQPQRAAPSTRSGWDN). Residues 131 to 347 (NVNVKHTFDN…GALNRVIANA (217 aa)) are domain III, AAA+ region. Residues Gly-175, Gly-177, Lys-178, and Thr-179 each contribute to the ATP site. Positions 348–467 (NFTGRAITID…FSNLIRTLSS (120 aa)) are domain IV, binds dsDNA.

This sequence belongs to the DnaA family. Oligomerizes as a right-handed, spiral filament on DNA at oriC.

It is found in the cytoplasm. Functionally, plays an essential role in the initiation and regulation of chromosomal replication. ATP-DnaA binds to the origin of replication (oriC) to initiate formation of the DNA replication initiation complex once per cell cycle. Binds the DnaA box (a 9 base pair repeat at the origin) and separates the double-stranded (ds)DNA. Forms a right-handed helical filament on oriC DNA; dsDNA binds to the exterior of the filament while single-stranded (ss)DNA is stabiized in the filament's interior. The ATP-DnaA-oriC complex binds and stabilizes one strand of the AT-rich DNA unwinding element (DUE), permitting loading of DNA polymerase. After initiation quickly degrades to an ADP-DnaA complex that is not apt for DNA replication. Binds acidic phospholipids. This is Chromosomal replication initiator protein DnaA from Escherichia coli O157:H7.